Reading from the N-terminus, the 331-residue chain is MAVFTTVSQDEIARWLLDFNLGEVRELRGIASGIENSNFFLTTEHDGQTRQYVLTIFERLTFAQLPYYLHLMAHLAERGIRVPAPIPARDGEILRPLKGKPATIVTRLPGASQLAPDAQHCAEVGDMLARMHLAGQDYPRQQPNLRSLPWWRQTEPEILPFLDAGQRALLQQEIAHQAAFFASTDYAGLGSGPCHCDLFRDNALFEEDGSGRHRLGGFFDFYFAGNDKWLFDVAVTVNDWCIDLASGELDPARTQALLRAYHAVRPLTATEAAHWQDMLRAGALRFWVSRLWDFYLPREADMLQPHDPTHFERILRRRIGADPASAPLPWI.

Belongs to the pseudomonas-type ThrB family.

The enzyme catalyses L-homoserine + ATP = O-phospho-L-homoserine + ADP + H(+). Its pathway is amino-acid biosynthesis; L-threonine biosynthesis; L-threonine from L-aspartate: step 4/5. The protein is Homoserine kinase of Cupriavidus necator (strain ATCC 17699 / DSM 428 / KCTC 22496 / NCIMB 10442 / H16 / Stanier 337) (Ralstonia eutropha).